A 257-amino-acid chain; its full sequence is NAD-capped RNA hydrolase NudC (257 aa).

Arg69 provides a ligand contact to substrate. 2 residues coordinate Zn(2+): Cys98 and Cys101. Glu111 contributes to the substrate binding site. 2 residues coordinate Zn(2+): Cys116 and Cys119. Tyr124 contributes to the substrate binding site. One can recognise a Nudix hydrolase domain in the interval 125–248 (PQIAPCIIVA…TVARRLIEDT (124 aa)). Ala158, Glu174, and Glu178 together coordinate a divalent metal cation. Residues 159–180 (GFVEVGETLEQAAAREIFEESR) carry the Nudix box motif. 192-199 (QPWPFPHS) is a binding site for substrate. Glu219 contributes to the a divalent metal cation binding site. Substrate is bound at residue Ala241.

Belongs to the Nudix hydrolase family. NudC subfamily. As to quaternary structure, homodimer. Mg(2+) is required as a cofactor. Requires Mn(2+) as cofactor. Zn(2+) serves as cofactor.

It catalyses the reaction a 5'-end NAD(+)-phospho-ribonucleoside in mRNA + H2O = a 5'-end phospho-adenosine-phospho-ribonucleoside in mRNA + beta-nicotinamide D-ribonucleotide + 2 H(+). The enzyme catalyses NAD(+) + H2O = beta-nicotinamide D-ribonucleotide + AMP + 2 H(+). The catalysed reaction is NADH + H2O = reduced beta-nicotinamide D-ribonucleotide + AMP + 2 H(+). In terms of biological role, mRNA decapping enzyme that specifically removes the nicotinamide adenine dinucleotide (NAD) cap from a subset of mRNAs by hydrolyzing the diphosphate linkage to produce nicotinamide mononucleotide (NMN) and 5' monophosphate mRNA. The NAD-cap is present at the 5'-end of some mRNAs and stabilizes RNA against 5'-processing. Has preference for mRNAs with a 5'-end purine. Catalyzes the hydrolysis of a broad range of dinucleotide pyrophosphates. In Edwardsiella ictaluri (strain 93-146), this protein is NAD-capped RNA hydrolase NudC.